A 416-amino-acid chain; its full sequence is E3 ubiquitin-protein ligase makorin-2 (416 aa).

2 C3H1-type zinc fingers span residues Ser2–Ala29 and Ser31–Pro58. The span at Asn113–Thr122 shows a compositional bias: basic and acidic residues. Positions Asn113–Met142 are disordered. The segment covering Gln123–Pro136 has biased composition (polar residues). Ser139 is subject to Phosphoserine. The C3H1-type 3 zinc-finger motif lies at Ser165–Val192. The segment at Cys193–His222 is makorin-type Cys-His. Residues Cys238–Arg292 form an RING-type zinc finger. The C3H1-type 4 zinc finger occupies Gly321–Pro350.

As to quaternary structure, interacts with PDLIM2 (via LIM zinc-binding domain). Interacts with RELA. Expressed in sperm, with significantly reduced expression in sperm of patients with oligoasthenoteratozoospermia (at protein level). Widely expressed with expression in testis, ovary, small intestine, colon, peripheral blood leukocytes, fetal liver, bone marrow, thymus, lymph node and spleen.

The protein resides in the cytoplasm. The protein localises to the nucleus. The enzyme catalyses S-ubiquitinyl-[E2 ubiquitin-conjugating enzyme]-L-cysteine + [acceptor protein]-L-lysine = [E2 ubiquitin-conjugating enzyme]-L-cysteine + N(6)-ubiquitinyl-[acceptor protein]-L-lysine.. It participates in protein modification; protein ubiquitination. E3 ubiquitin ligase catalyzing the covalent attachment of ubiquitin moieties onto substrate proteins. Promotes the polyubiquitination and proteasome-dependent degradation of RELA/p65, thereby suppressing RELA-mediated NF-kappaB transactivation and negatively regulating inflammatory responses. Plays a role in the regulation of spermiation and in male fertility. The protein is E3 ubiquitin-protein ligase makorin-2 (MKRN2) of Homo sapiens (Human).